The following is a 273-amino-acid chain: NADH-ubiquinone oxidoreductase 29.9 kDa subunit, mitochondrial (273 aa).

Residues 1 to 8 (MRAALRLL) constitute a mitochondrion transit peptide.

This sequence belongs to the complex I NDUFA5 subunit family. As to quaternary structure, complex I is composed of about 40 different subunits.

It localises to the mitochondrion inner membrane. Accessory subunit of the mitochondrial membrane respiratory chain NADH dehydrogenase (Complex I), that is believed not to be involved in catalysis. Complex I functions in the transfer of electrons from NADH to the respiratory chain. The immediate electron acceptor for the enzyme is believed to be ubiquinone. The polypeptide is NADH-ubiquinone oxidoreductase 29.9 kDa subunit, mitochondrial (nuo-32) (Neurospora crassa (strain ATCC 24698 / 74-OR23-1A / CBS 708.71 / DSM 1257 / FGSC 987)).